The following is a 202-amino-acid chain: N-acetyltransferase 9-like protein (202 aa).

The region spanning 34-184 (EEIRRLTGSE…FTFELPKNRL (151 aa)) is the N-acetyltransferase domain.

It belongs to the acetyltransferase family. GNAT subfamily.

The protein is N-acetyltransferase 9-like protein of Caenorhabditis elegans.